Consider the following 171-residue polypeptide: Large ribosomal subunit protein bL9 (171 aa).

Belongs to the bacterial ribosomal protein bL9 family.

Functionally, binds to the 23S rRNA. The sequence is that of Large ribosomal subunit protein bL9 from Rickettsia rickettsii (strain Iowa).